The primary structure comprises 407 residues: Imidazolonepropionase (407 aa).

Positions 72 and 74 each coordinate Fe(3+). Residues His72 and His74 each contribute to the Zn(2+) site. 4-imidazolone-5-propanoate-binding residues include Arg81, Tyr144, and His177. Tyr144 provides a ligand contact to N-formimidoyl-L-glutamate. His242 contributes to the Fe(3+) binding site. Zn(2+) is bound at residue His242. Residue Gln245 coordinates 4-imidazolone-5-propanoate. Position 317 (Asp317) interacts with Fe(3+). Zn(2+) is bound at residue Asp317. Residues Asn319 and Gly321 each coordinate N-formimidoyl-L-glutamate. Thr322 contributes to the 4-imidazolone-5-propanoate binding site.

Belongs to the metallo-dependent hydrolases superfamily. HutI family. Requires Zn(2+) as cofactor. It depends on Fe(3+) as a cofactor.

The protein resides in the cytoplasm. It catalyses the reaction 4-imidazolone-5-propanoate + H2O = N-formimidoyl-L-glutamate. It participates in amino-acid degradation; L-histidine degradation into L-glutamate; N-formimidoyl-L-glutamate from L-histidine: step 3/3. Its function is as follows. Catalyzes the hydrolytic cleavage of the carbon-nitrogen bond in imidazolone-5-propanoate to yield N-formimidoyl-L-glutamate. It is the third step in the universal histidine degradation pathway. The protein is Imidazolonepropionase of Aliivibrio salmonicida (strain LFI1238) (Vibrio salmonicida (strain LFI1238)).